Reading from the N-terminus, the 394-residue chain is Acetate kinase (394 aa).

Mg(2+) is bound at residue N10. Position 17 (K17) interacts with ATP. Residue R87 participates in substrate binding. D144 serves as the catalytic Proton donor/acceptor. ATP is bound by residues 204 to 208 (HLGNG), 279 to 281 (DMR), and 327 to 331 (GIGEN). Mg(2+) is bound at residue E381.

It belongs to the acetokinase family. In terms of assembly, homodimer. The cofactor is Mg(2+). It depends on Mn(2+) as a cofactor.

It localises to the cytoplasm. The catalysed reaction is acetate + ATP = acetyl phosphate + ADP. The protein operates within metabolic intermediate biosynthesis; acetyl-CoA biosynthesis; acetyl-CoA from acetate: step 1/2. In terms of biological role, catalyzes the formation of acetyl phosphate from acetate and ATP. Can also catalyze the reverse reaction. This Pseudomonas aeruginosa (strain LESB58) protein is Acetate kinase.